The primary structure comprises 78 residues: ATP synthase subunit c (78 aa).

The next 2 membrane-spanning stretches (helical) occupy residues 9–29 and 56–76; these read AFIGAGLAMIAILGVGIGQGW and AAVTETGALYCFIIAILLVFV.

Belongs to the ATPase C chain family. As to quaternary structure, F-type ATPases have 2 components, F(1) - the catalytic core - and F(0) - the membrane proton channel. F(1) has five subunits: alpha(3), beta(3), gamma(1), delta(1), epsilon(1). F(0) has three main subunits: a(1), b(2) and c(10-14). The alpha and beta chains form an alternating ring which encloses part of the gamma chain. F(1) is attached to F(0) by a central stalk formed by the gamma and epsilon chains, while a peripheral stalk is formed by the delta and b chains.

The protein resides in the cell membrane. F(1)F(0) ATP synthase produces ATP from ADP in the presence of a proton or sodium gradient. F-type ATPases consist of two structural domains, F(1) containing the extramembraneous catalytic core and F(0) containing the membrane proton channel, linked together by a central stalk and a peripheral stalk. During catalysis, ATP synthesis in the catalytic domain of F(1) is coupled via a rotary mechanism of the central stalk subunits to proton translocation. Functionally, key component of the F(0) channel; it plays a direct role in translocation across the membrane. A homomeric c-ring of between 10-14 subunits forms the central stalk rotor element with the F(1) delta and epsilon subunits. This is ATP synthase subunit c from Malacoplasma penetrans (strain HF-2) (Mycoplasma penetrans).